The chain runs to 165 residues: Putative TRAP transporter small permease protein HI_0051 (165 aa).

A run of 4 helical transmembrane segments spans residues 20 to 40, 51 to 71, 94 to 114, and 136 to 156; these read LEYL…FNSV, FSEE…IILV, IVLI…AYGA, and LYLA…FSMI.

Belongs to the TRAP transporter small permease family.

The protein localises to the cell inner membrane. The chain is Putative TRAP transporter small permease protein HI_0051 from Haemophilus influenzae (strain ATCC 51907 / DSM 11121 / KW20 / Rd).